The following is a 203-amino-acid chain: LexA repressor (203 aa).

Residues 32–52 (RAEICTAFGFRSPNAAETHLR) constitute a DNA-binding region (H-T-H motif). Active-site for autocatalytic cleavage activity residues include Ser-121 and Lys-158.

It belongs to the peptidase S24 family. As to quaternary structure, homodimer.

The catalysed reaction is Hydrolysis of Ala-|-Gly bond in repressor LexA.. Represses a number of genes involved in the response to DNA damage (SOS response), including recA and lexA. In the presence of single-stranded DNA, RecA interacts with LexA causing an autocatalytic cleavage which disrupts the DNA-binding part of LexA, leading to derepression of the SOS regulon and eventually DNA repair. In Aromatoleum aromaticum (strain DSM 19018 / LMG 30748 / EbN1) (Azoarcus sp. (strain EbN1)), this protein is LexA repressor.